The chain runs to 25 residues: Toxin LyeTx 1 (25 aa).

L25 carries the leucine amide modification.

Expressed by the venom gland.

The protein localises to the secreted. Its function is as follows. Has antimicrobial activity against Gram-positive bacterium S.aureus (MIC=3.79 uM), Gram-negative bacterium E.coli (MIC=7.81 uM) and yeasts C.krusei (MIC=26.3 uM) and C.neoformans (MIC=13.2 uM). Has hemolytic activity against rabbit erythrocytes. Forms pores in lipid bilayers in vitro; pore formation is reduced when cholesterol is present in the bilayers. The chain is Toxin LyeTx 1 from Lycosa erythrognatha (Wolf spider).